The chain runs to 96 residues: Large ribosomal subunit protein uL23 (96 aa).

It belongs to the universal ribosomal protein uL23 family. As to quaternary structure, part of the 50S ribosomal subunit. Contacts protein L29, and trigger factor when it is bound to the ribosome.

In terms of biological role, one of the early assembly proteins it binds 23S rRNA. One of the proteins that surrounds the polypeptide exit tunnel on the outside of the ribosome. Forms the main docking site for trigger factor binding to the ribosome. The polypeptide is Large ribosomal subunit protein uL23 (Ruthia magnifica subsp. Calyptogena magnifica).